The sequence spans 292 residues: Feruloyl esterase B (292 aa).

The signal sequence occupies residues 1 to 18 (MLPRTLLGLALTAATGLC). N-linked (GlcNAc...) asparagine glycans are attached at residues Asn-88, Asn-117, Asn-179, and Asn-245.

The protein belongs to the carbohydrate esterase 1 (CE1) family. Feruloyl esterase type B subfamily.

The protein localises to the secreted. The enzyme catalyses feruloyl-polysaccharide + H2O = ferulate + polysaccharide.. Functionally, involved in degradation of plant cell walls. Hydrolyzes of the feruloyl-arabinose ester bond in arabinoxylans as well as the feruloyl-galactose and feruloyl-arabinose ester bonds in pectin. The chain is Feruloyl esterase B (fae-1) from Neurospora crassa (strain ATCC 24698 / 74-OR23-1A / CBS 708.71 / DSM 1257 / FGSC 987).